A 1895-amino-acid polypeptide reads, in one-letter code: Probable WRKY transcription factor 19 (1895 aa).

The tract at residues 1-85 (MSEKEELPLT…SGSGLSQQLN (85 aa)) is disordered. Positions 10 to 22 (TLTSIGAATATSD) are enriched in polar residues. Positions 28–39 (GSSGEGISSSSS) are enriched in low complexity. Over residues 46-62 (MQNSPTGLMISQSSSMC) the composition is skewed to polar residues. Positions 75-85 (SSGSGLSQQLN) are enriched in low complexity. A PAH domain is found at 291-371 (RPLTIDGGGN…LGFNTYLSKE (81 aa)). Positions 408–417 (ANMQPQTEYP) are enriched in polar residues. Disordered regions lie at residues 408 to 442 (ANMQ…SSLL), 517 to 538 (YKDR…TYLS), and 580 to 620 (EASD…ADAS). Residues 418–427 (SSSAVQSFSS) show a composition bias toward low complexity. The segment covering 428–442 (GQPQIPTSAPDSSLL) has biased composition (polar residues). Residues 462 to 526 (NVDKQVNDGY…YKDRHNHEPP (65 aa)) constitute a DNA-binding region (WRKY 1). Residues 635-700 (SEVDNLDDGY…SLCRRGISVY (66 aa)) constitute a DNA-binding region (WRKY 2). Positions 666-808 (KDYDVVIRYG…EIVRDALKVL (143 aa)) constitute a TIR domain. Positions 800–1087 (IVRDALKVLC…LDGCGFSAHV (288 aa)) constitute an NB-ARC domain. 844–851 (GTVGIGKT) serves as a coordination point for ATP. 10 LRR repeats span residues 1206–1227 (KLRL…FNPE), 1228–1249 (NLVE…KKAR), 1259–1281 (KLKK…SSAT), 1282–1304 (NLEH…ISYL), 1306–1328 (KLVF…VDLE), 1329–1351 (SLEV…SPNV), 1352–1371 (KELY…IKNL), 1373–1395 (LLEK…IYKL), 1397–1419 (HLET…SRRM), and 1421–1442 (CLRF…ISYL). Residues 1562–1583 (ETVAPPSSSSEAREEEVETEET) form a disordered region. The Protein kinase domain maps to 1626 to 1877 (WQKGQLLGRG…AAELLNHPFV (252 aa)). ATP is bound by residues 1632–1640 (LGRGSLGSV) and Lys1654. Asp1758 is an active-site residue.

It belongs to the disease resistance X-TIR-NB-LRR-X family.

It localises to the nucleus. Its function is as follows. Transcription factor. Interacts specifically with the W box (5'-(T)TGAC[CT]-3'), a frequently occurring elicitor-responsive cis-acting element. May act also as a disease resistance protein with a serine/threonine-protein kinase activity. The polypeptide is Probable WRKY transcription factor 19 (WRKY19) (Arabidopsis thaliana (Mouse-ear cress)).